Consider the following 384-residue polypeptide: 8-amino-7-oxononanoate synthase (384 aa).

Residue R21 participates in substrate binding. 108–109 contacts pyridoxal 5'-phosphate; the sequence is GF. H133 contacts substrate. The pyridoxal 5'-phosphate site is built by S179, H207, and T233. An N6-(pyridoxal phosphate)lysine modification is found at K236. T352 contributes to the substrate binding site.

It belongs to the class-II pyridoxal-phosphate-dependent aminotransferase family. BioF subfamily. Homodimer. Pyridoxal 5'-phosphate serves as cofactor.

The enzyme catalyses 6-carboxyhexanoyl-[ACP] + L-alanine + H(+) = (8S)-8-amino-7-oxononanoate + holo-[ACP] + CO2. It functions in the pathway cofactor biosynthesis; biotin biosynthesis. In terms of biological role, catalyzes the decarboxylative condensation of pimeloyl-[acyl-carrier protein] and L-alanine to produce 8-amino-7-oxononanoate (AON), [acyl-carrier protein], and carbon dioxide. The protein is 8-amino-7-oxononanoate synthase of Escherichia coli O7:K1 (strain IAI39 / ExPEC).